A 516-amino-acid chain; its full sequence is BAR/IMD domain-containing adapter protein 2-like 1 (516 aa).

The IMD domain maps to 1–249; sequence MSRGPEEVNR…MNMIEEIKTP (249 aa). A coiled-coil region spans residues 115–148; the sequence is MNATLKRYQAEHRNKLDSLEKSQAELKKIRRKSQ. Phosphothreonine occurs at positions 248 and 257. Phosphoserine occurs at positions 261 and 281. Positions 303-328 are disordered; it reads NPATAGQSAEKTNNSTANTGDDPSLQ. At S332 the chain carries Phosphoserine. The 64-residue stretch at 340 to 403 folds into the SH3 domain; that stretch reads MKKQKVKTIF…PSSYTKLLEE (64 aa). T413 bears the Phosphothreonine mark. Phosphoserine occurs at positions 415, 421, and 423. Residues 454-516 are disordered; sequence ADAAKIPSTS…TNDRSAPIIR (63 aa). Residues 474 to 485 are compositionally biased toward polar residues; sequence ATSTSPSDSNGT. The interval 488–516 is binds F-actin; it reads PPFLSGENPFATVKLRPTVTNDRSAPIIR.

As to quaternary structure, interacts with RAC1. Binds to F-actin. Interacts with FASLG. Post-translationally, phosphorylated on tyrosine in response to insulin.

The protein resides in the cytoplasm. It is found in the cytoskeleton. Functionally, may function as adapter protein. Involved in the formation of clusters of actin bundles. Plays a role in the reorganization of the actin cytoskeleton in response to bacterial infection. This chain is BAR/IMD domain-containing adapter protein 2-like 1 (Baiap2l1), found in Rattus norvegicus (Rat).